The chain runs to 77 residues: Putative snRNP Sm-like protein (77 aa).

One can recognise a Sm domain in the interval Pro8 to Ala77.

The protein belongs to the snRNP Sm proteins family.

The protein is Putative snRNP Sm-like protein of Aeropyrum pernix (strain ATCC 700893 / DSM 11879 / JCM 9820 / NBRC 100138 / K1).